A 1154-amino-acid chain; its full sequence is DNA-directed RNA polymerase subunit beta (1154 aa).

Basic and acidic residues predominate over residues 1108 to 1123 (ELGIDIQGEDRSERAG). Residues 1108-1136 (ELGIDIQGEDRSERAGEPASPDEMDDEEE) are disordered. Residues 1127 to 1136 (SPDEMDDEEE) show a composition bias toward acidic residues.

The protein belongs to the RNA polymerase beta chain family. In terms of assembly, the RNAP catalytic core consists of 2 alpha, 1 beta, 1 beta' and 1 omega subunit. When a sigma factor is associated with the core the holoenzyme is formed, which can initiate transcription.

It catalyses the reaction RNA(n) + a ribonucleoside 5'-triphosphate = RNA(n+1) + diphosphate. Functionally, DNA-dependent RNA polymerase catalyzes the transcription of DNA into RNA using the four ribonucleoside triphosphates as substrates. In Heliobacterium modesticaldum (strain ATCC 51547 / Ice1), this protein is DNA-directed RNA polymerase subunit beta.